The following is a 159-amino-acid chain: U1 small nuclear ribonucleoprotein C (159 aa).

A Matrin-type zinc finger spans residues 4–36 (FYCDYCDTYLTHDSPSVRKTHCSGRKHKENVKD). A disordered region spans residues 61 to 99 (KIPPTPFPGAPPPGGSLLPHPSIGGPPRPGMLPAPPMGG). Composition is skewed to pro residues over residues 63 to 74 (PPTPFPGAPPPG) and 84 to 99 (GGPPRPGMLPAPPMGG).

This sequence belongs to the U1 small nuclear ribonucleoprotein C family. As to quaternary structure, component of the U1 snRNP. The U1 snRNP is composed of the U1 snRNA and the 7 core Sm proteins snrpb, snrpd1, snrpd2, snrpd3, snrpe, snrpf and snrpg that assemble in a heptameric protein ring on the Sm site of the small nuclear RNA to form the core snRNP, and at least 3 U1 snRNP-specific proteins snrnp70/U1-70K, snrpa/U1-A and snrpc/U1-C. snrpc/U1-C interacts with U1 snRNA and the 5' splice-site region of the pre-mRNA.

It is found in the nucleus. In terms of biological role, component of the spliceosomal U1 snRNP, which is essential for recognition of the pre-mRNA 5' splice-site and the subsequent assembly of the spliceosome. snrpc/U1-C is directly involved in initial 5' splice-site recognition for both constitutive and regulated alternative splicing. The interaction with the 5' splice-site seems to precede base-pairing between the pre-mRNA and the U1 snRNA. Stimulates commitment or early (E) complex formation by stabilizing the base pairing of the 5' end of the U1 snRNA and the 5' splice-site region. The chain is U1 small nuclear ribonucleoprotein C from Danio rerio (Zebrafish).